We begin with the raw amino-acid sequence, 239 residues long: dITP/XTP pyrophosphatase (239 aa).

Position 7-12 (7-12 (THNEGK)) interacts with substrate. The active-site Proton acceptor is the Asp-74. Mg(2+) is bound at residue Asp-74. Substrate contacts are provided by residues Ser-75, 182–185 (FGYD), Lys-214, and 219–220 (HR).

This sequence belongs to the HAM1 NTPase family. Homodimer. Mg(2+) is required as a cofactor.

The enzyme catalyses XTP + H2O = XMP + diphosphate + H(+). The catalysed reaction is dITP + H2O = dIMP + diphosphate + H(+). It catalyses the reaction ITP + H2O = IMP + diphosphate + H(+). Its function is as follows. Pyrophosphatase that catalyzes the hydrolysis of nucleoside triphosphates to their monophosphate derivatives, with a high preference for the non-canonical purine nucleotides XTP (xanthosine triphosphate), dITP (deoxyinosine triphosphate) and ITP. Seems to function as a house-cleaning enzyme that removes non-canonical purine nucleotides from the nucleotide pool, thus preventing their incorporation into DNA/RNA and avoiding chromosomal lesions. The protein is dITP/XTP pyrophosphatase of Bifidobacterium animalis subsp. lactis (strain AD011).